A 115-amino-acid polypeptide reads, in one-letter code: Large ribosomal subunit protein uL24 (115 aa).

This sequence belongs to the universal ribosomal protein uL24 family. Part of the 50S ribosomal subunit.

Functionally, one of two assembly initiator proteins, it binds directly to the 5'-end of the 23S rRNA, where it nucleates assembly of the 50S subunit. One of the proteins that surrounds the polypeptide exit tunnel on the outside of the subunit. The chain is Large ribosomal subunit protein uL24 from Beutenbergia cavernae (strain ATCC BAA-8 / DSM 12333 / CCUG 43141 / JCM 11478 / NBRC 16432 / NCIMB 13614 / HKI 0122).